A 200-amino-acid chain; its full sequence is Imidazoleglycerol-phosphate dehydratase (200 aa).

Belongs to the imidazoleglycerol-phosphate dehydratase family.

It is found in the cytoplasm. The enzyme catalyses D-erythro-1-(imidazol-4-yl)glycerol 3-phosphate = 3-(imidazol-4-yl)-2-oxopropyl phosphate + H2O. Its pathway is amino-acid biosynthesis; L-histidine biosynthesis; L-histidine from 5-phospho-alpha-D-ribose 1-diphosphate: step 6/9. The polypeptide is Imidazoleglycerol-phosphate dehydratase (Bifidobacterium animalis subsp. lactis (strain AD011)).